A 149-amino-acid chain; its full sequence is MSIPFSNTHYRIPQGFGNLLEGLTREILREQPDNIPAFAAAYFENLLEKREKTSFDPAEWGAKVEDRFYNNHAFKEQEQVEKCEQELAKSSGREETPVTPFEESTEEEREQEEAAALKIQSLFRGHVAREEVKKMKSDKNENLKEEADN.

Positions 83 to 96 (CEQELAKSSGREET) are enriched in basic and acidic residues. The disordered stretch occupies residues 83–114 (CEQELAKSSGREETPVTPFEESTEEEREQEEA). The segment covering 103 to 113 (ESTEEEREQEE) has biased composition (acidic residues). Residues 112-141 (EEAAALKIQSLFRGHVAREEVKKMKSDKNE) form the IQ domain.

In terms of assembly, homodimer. May interact with ROPN1. In terms of tissue distribution, testis- and sperm-specific.

It is found in the membrane. In terms of biological role, sperm surface zona pellucida binding protein. Helps to bind spermatozoa to the zona pellucida with high affinity. Might function in binding zona pellucida and carbohydrates. This is Sperm surface protein Sp17 (Spa17) from Mus musculus (Mouse).